The chain runs to 1061 residues: E3 SUMO-protein ligase ZNF451 (1061 aa).

The interval 1-38 (MGDPGSEIIESVPPAGPEASESTTDENEDDIQFVSEGP) is disordered. Residues 1–246 (MGDPGSEIIE…TDDGHNNNLL (246 aa)) are sufficient for E3 SUMO-protein ligase activity. The segment at 1–344 (MGDPGSEIIE…RVHCRNAGPV (344 aa)) is important for interaction with SUMO1 and SUMO2. An interaction with SUMO2 1 region spans residues 30 to 37 (DIQFVSEG). The short motif at 38–41 (PLRP) is the PLRP element. An interaction with SUMO2 2 region spans residues 42–50 (VLEYIDLVS). Glycyl lysine isopeptide (Lys-Gly) (interchain with G-Cter in SUMO2) cross-links involve residues Lys-75, Lys-77, Lys-106, Ile-121, Ala-130, Leu-138, Lys-139, Lys-144, and Lys-153. Ser-155 is subject to Phosphoserine. Residue Arg-158 is modified to Omega-N-methylarginine. Residues Val-164 and Lys-167 each participate in a glycyl lysine isopeptide (Lys-Gly) (interchain with G-Cter in SUMO2) cross-link. Residues 168–525 (PILCPIMHCN…HMSRIHGGAH (358 aa)) form an important for interaction with SMAD4 region. A C2H2-type 1 zinc finger spans residues 169 to 195 (ILCPIMHCNKEFDNGHLLLGHLKRFDH). Glycyl lysine isopeptide (Lys-Gly) (interchain with G-Cter in SUMO2) cross-links involve residues Gln-226, Gly-240, Pro-247, Ser-263, Lys-270, Lys-275, Lys-283, Asp-286, Lys-288, Pro-293, Lys-301, and Lys-309. Residues 253–277 (FACPNCFLLFSRKEECSKHMSGKNH) form a C2H2-type 2 zinc finger. The C2H2-type 3 zinc finger occupies 315 to 337 (VKCVACHKTLRSHMELTAHFRVH). Lys-357 is covalently cross-linked (Glycyl lysine isopeptide (Lys-Gly) (interchain with G-Cter in SUMO2)). Residues 362-386 (GYCPDCNQVFVDETSTQNHKQNSGH) form a C2H2-type 4 zinc finger. A Glycyl lysine isopeptide (Lys-Gly) (interchain with G-Cter in SUMO2) cross-link involves residue Lys-423. Ser-432 is subject to Phosphoserine. Residues Lys-434, Lys-446, Lys-452, Lys-454, Lys-464, Phe-473, Val-490, Cys-500, Lys-505, Asp-508, Gly-522, Trp-532, Lys-543, and Lys-585 each participate in a glycyl lysine isopeptide (Lys-Gly) (interchain with G-Cter in SUMO2) cross-link. Residues 498–521 (YKCVVCGKVCDDSGVIRLHMSRIH) form a C2H2-type 5 zinc finger. The segment at 531 to 554 (FWCRTCKKELTRKDTIMAHVTEFH) adopts a C2H2-type 6 zinc-finger fold. The C2H2-type 7; atypical zinc-finger motif lies at 606–631 (WQCRICEDMFDSQEYVKQHCMSLASH). Residues Lys-632, Lys-647, and Lys-664 each participate in a glycyl lysine isopeptide (Lys-Gly) (interchain with G-Cter in SUMO2) cross-link. Residues 636–659 (YSCAHCRKPFHKIETLYRHCQDEH) form a C2H2-type 8 zinc finger. The segment at 667 to 690 (YFCGLCDLIFNVEEAFLSHYEEHH) adopts a C2H2-type 9 zinc-finger fold. Residue Lys-706 forms a Glycyl lysine isopeptide (Lys-Gly) (interchain with G-Cter in SUMO1); alternate linkage. Lys-706 is covalently cross-linked (Glycyl lysine isopeptide (Lys-Gly) (interchain with G-Cter in SUMO2); alternate). Glycyl lysine isopeptide (Lys-Gly) (interchain with G-Cter in SUMO2) cross-links involve residues Lys-731 and Lys-748. A C2H2-type 10 zinc finger spans residues 753–776 (FRCSLCSATAQNLTDMNTHIHQVH). Residues Lys-777, Lys-779, Lys-790, Lys-817, Lys-827, Lys-832, Lys-843, Lys-845, Lys-852, Lys-951, Lys-992, and Lys-993 each participate in a glycyl lysine isopeptide (Lys-Gly) (interchain with G-Cter in SUMO2) cross-link. A C2H2-type 11 zinc finger spans residues 789–812 (IKCGTCTKAFHDPESAQQHFHRKH). Positions 1050 to 1061 (LEEAIRRSLEEM) are important for ubiquitin binding.

It belongs to the krueppel C2H2-type zinc-finger protein family. In terms of assembly, homooligomer. Interacts (via N-terminal region) with SUMO1. Interacts (via N-terminal region) with SUMO2. Interacts simultaneously with two SUMO2 chains. Identified in a complex with SUMO2 and UBE2I/UBC9, where one ZNF451 interacts with one UBE2I/UBC9 and two SUMO2 chains, one bound to the UBE2I/UBC9 active site and the other to another region of the same UBE2I/UBC9 molecule. Interacts (via C-terminus) with ubiquitin. Interacts (via N-terminal zinc-finger domains) with SMAD4 (via MH2 domain). Interacts with SMAD2 and SMAD3. Identified in a complex that contains at least ZNF451, SMAD2, SMAD3 and SMAD4. Interacts with EP300. Inhibits interaction between EP300 and the SMAD4 complex. Interacts with SIMC1. In terms of processing, sumoylated. Predominantly sumoylated on the N-terminal region that is important for interaction with SUMO1 and SUMO2. Sumoylation is important for localization in nuclear granules; desumoylation leads to diffuse nucleoplasmic location. Autosumoylated (in vitro). Sumoylation enhances E3 SUMO-protein ligase activity.

The protein localises to the nucleus. It is found in the PML body. It localises to the nucleoplasm. It participates in protein modification; protein sumoylation. Functionally, E3 SUMO-protein ligase; has a preference for SUMO2 and SUMO3 and facilitates UBE2I/UBC9-mediated sumoylation of target proteins. Plays a role in protein SUMO2 modification in response to stress caused by DNA damage and by proteasome inhibitors (in vitro). Required for MCM4 sumoylation. Has no activity with SUMO1. Preferentially transfers an additional SUMO2 chain onto the SUMO2 consensus site 'Lys-11'. Negatively regulates transcriptional activation mediated by the SMAD4 complex in response to TGF-beta signaling. Inhibits EP300-mediated acetylation of histone H3 at 'Lys-9'. Plays a role in regulating the transcription of AR targets. The protein is E3 SUMO-protein ligase ZNF451 (ZNF451) of Homo sapiens (Human).